Consider the following 173-residue polypeptide: 3-hydroxydecanoyl-[acyl-carrier-protein] dehydratase (173 aa).

Residue histidine 71 is part of the active site.

The protein belongs to the thioester dehydratase family. FabA subfamily. Homodimer.

It localises to the cytoplasm. It carries out the reaction a (3R)-hydroxyacyl-[ACP] = a (2E)-enoyl-[ACP] + H2O. The enzyme catalyses (3R)-hydroxydecanoyl-[ACP] = (2E)-decenoyl-[ACP] + H2O. It catalyses the reaction (2E)-decenoyl-[ACP] = (3Z)-decenoyl-[ACP]. It functions in the pathway lipid metabolism; fatty acid biosynthesis. Necessary for the introduction of cis unsaturation into fatty acids. Catalyzes the dehydration of (3R)-3-hydroxydecanoyl-ACP to E-(2)-decenoyl-ACP and then its isomerization to Z-(3)-decenoyl-ACP. Can catalyze the dehydratase reaction for beta-hydroxyacyl-ACPs with saturated chain lengths up to 16:0, being most active on intermediate chain length. The chain is 3-hydroxydecanoyl-[acyl-carrier-protein] dehydratase from Bradyrhizobium sp. (strain ORS 278).